A 258-amino-acid chain; its full sequence is Ribosomal RNA large subunit methyltransferase E (258 aa).

5 residues coordinate S-adenosyl-L-methionine: G58, W60, D78, D96, and D120. Catalysis depends on K160, which acts as the Proton acceptor.

This sequence belongs to the class I-like SAM-binding methyltransferase superfamily. RNA methyltransferase RlmE family.

Its subcellular location is the cytoplasm. It catalyses the reaction uridine(2552) in 23S rRNA + S-adenosyl-L-methionine = 2'-O-methyluridine(2552) in 23S rRNA + S-adenosyl-L-homocysteine + H(+). Functionally, specifically methylates the uridine in position 2552 of 23S rRNA at the 2'-O position of the ribose in the fully assembled 50S ribosomal subunit. The sequence is that of Ribosomal RNA large subunit methyltransferase E from Methanococcus maripaludis (strain C5 / ATCC BAA-1333).